Consider the following 407-residue polypeptide: Serine hydroxymethyltransferase (407 aa).

(6S)-5,6,7,8-tetrahydrofolate-binding positions include leucine 117 and 121–123; that span reads GHL. An N6-(pyridoxal phosphate)lysine modification is found at lysine 226. Position 242 (glutamate 242) interacts with (6S)-5,6,7,8-tetrahydrofolate.

It belongs to the SHMT family. Homodimer. Pyridoxal 5'-phosphate serves as cofactor.

The protein localises to the cytoplasm. It carries out the reaction (6R)-5,10-methylene-5,6,7,8-tetrahydrofolate + glycine + H2O = (6S)-5,6,7,8-tetrahydrofolate + L-serine. The protein operates within one-carbon metabolism; tetrahydrofolate interconversion. It functions in the pathway amino-acid biosynthesis; glycine biosynthesis; glycine from L-serine: step 1/1. Functionally, catalyzes the reversible interconversion of serine and glycine with tetrahydrofolate (THF) serving as the one-carbon carrier. This reaction serves as the major source of one-carbon groups required for the biosynthesis of purines, thymidylate, methionine, and other important biomolecules. Also exhibits THF-independent aldolase activity toward beta-hydroxyamino acids, producing glycine and aldehydes, via a retro-aldol mechanism. The chain is Serine hydroxymethyltransferase from Thermus thermophilus (strain ATCC BAA-163 / DSM 7039 / HB27).